A 390-amino-acid chain; its full sequence is Queuine tRNA-ribosyltransferase (390 aa).

The active-site Proton acceptor is the aspartate 92. Substrate contacts are provided by residues 92-96 (DSGGF), aspartate 146, glutamine 195, and glycine 222. The interval 253–259 (GVGTPED) is RNA binding. Aspartate 272 serves as the catalytic Nucleophile. Residues 277-281 (TRNAR) form an RNA binding; important for wobble base 34 recognition region. Cysteine 310, cysteine 312, cysteine 315, and histidine 354 together coordinate Zn(2+).

Belongs to the queuine tRNA-ribosyltransferase family. In terms of assembly, homodimer. Within each dimer, one monomer is responsible for RNA recognition and catalysis, while the other monomer binds to the replacement base PreQ1. It depends on Zn(2+) as a cofactor.

It carries out the reaction 7-aminomethyl-7-carbaguanine + guanosine(34) in tRNA = 7-aminomethyl-7-carbaguanosine(34) in tRNA + guanine. It participates in tRNA modification; tRNA-queuosine biosynthesis. Catalyzes the base-exchange of a guanine (G) residue with the queuine precursor 7-aminomethyl-7-deazaguanine (PreQ1) at position 34 (anticodon wobble position) in tRNAs with GU(N) anticodons (tRNA-Asp, -Asn, -His and -Tyr). Catalysis occurs through a double-displacement mechanism. The nucleophile active site attacks the C1' of nucleotide 34 to detach the guanine base from the RNA, forming a covalent enzyme-RNA intermediate. The proton acceptor active site deprotonates the incoming PreQ1, allowing a nucleophilic attack on the C1' of the ribose to form the product. After dissociation, two additional enzymatic reactions on the tRNA convert PreQ1 to queuine (Q), resulting in the hypermodified nucleoside queuosine (7-(((4,5-cis-dihydroxy-2-cyclopenten-1-yl)amino)methyl)-7-deazaguanosine). This is Queuine tRNA-ribosyltransferase from Delftia acidovorans (strain DSM 14801 / SPH-1).